Reading from the N-terminus, the 414-residue chain is 2-epi-5-epi-valiolone synthase (414 aa).

NAD(+)-binding positions include D70, 101-104 (ESAK), 134-138 (GVLTD), 158-159 (TT), K171, K180, and 198-201 (FLAT). The active site involves K171. Residues E213, H284, and H300 each coordinate Zn(2+).

This sequence belongs to the sugar phosphate cyclases superfamily. EEVS family. Requires NAD(+) as cofactor. Zn(2+) is required as a cofactor.

The enzyme catalyses D-sedoheptulose 7-phosphate = 2-epi-5-epi-valiolone + phosphate. Its pathway is antibiotic biosynthesis. Functionally, catalyzes the cyclization of D-sedoheptulose 7-phosphate to 2-epi-5-epi-valiolone. Involved in validamycin biosynthesis. This Streptomyces hygroscopicus subsp. jinggangensis (strain 5008) protein is 2-epi-5-epi-valiolone synthase.